The chain runs to 238 residues: Thrombin-like enzyme AhV_TL-I (238 aa).

In terms of domain architecture, Peptidase S1 spans 1–229 (IIGGDECNIN…HLDWIENIIA (229 aa)). 6 disulfides stabilise this stretch: Cys7/Cys141, Cys28/Cys44, Cys76/Cys236, Cys120/Cys190, Cys152/Cys169, and Cys180/Cys205. His43 acts as the Charge relay system in catalysis. Asn81 carries an N-linked (GlcNAc...) asparagine glycan. Asp88 serves as the catalytic Charge relay system. The active-site Charge relay system is the Ser184.

The protein belongs to the peptidase S1 family. Snake venom subfamily. As to quaternary structure, monomer. Post-translationally, N-glycosylated at Asn-81 by a disaccharide composed of two N-acetylglucosamine (NAG). The presence of this N-glycan deforms the enzyme and Removing the carbohydrate moiety increases the esterase activity, but induces a complete loss of contractile response on mouse thoracic aorta. As to expression, expressed by the venom gland.

Its subcellular location is the secreted. Its activity is regulated as follows. Inhibited by PMSF, L-cysteine and partially by SBTI and leupeptin. Thrombin-like enzyme that shows fibrinogenolytic activity against both the Aalpha (FGA) and Bbeta (FGB) chains of bovine fibrinogen. This enzyme has poor esterolytic activity upon BAEE substrate. It induces mouse thoracic aortic ring contraction with EC(50)=147 nmol/L. It shows vasoconstrictor effects that are independent of the enzymatic activity, but related to the release of calcium ions form the calcium store, potentially through the activation of ryanodine receptors. This chain is Thrombin-like enzyme AhV_TL-I, found in Gloydius halys (Chinese water mocassin).